The primary structure comprises 433 residues: Ligand-dependent corepressor (433 aa).

The segment at 1–51 (MQRMIQQFAAEYTSKNSSTQDPSQPNSTKNQSLPKASPVTTSPTAATTQNP) is disordered. Residues 13-34 (TSKNSSTQDPSQPNSTKNQSLP) show a composition bias toward polar residues. Residues 36–48 (ASPVTTSPTAATT) show a composition bias toward low complexity. Phosphoserine is present on Ser42. Residues 53 to 57 (LSKLL) carry the Interaction with nuclear receptors motif. Phosphoserine is present on Ser63. Residues 64–147 (PLDLTVRKSQ…GTREGFGHST (84 aa)) form a disordered region. The segment covering 93–110 (AGSTSLSHSPGCSSTQGN) has biased composition (polar residues). Ser249 bears the Phosphoserine mark. Residue Lys254 forms a Glycyl lysine isopeptide (Lys-Gly) (interchain with G-Cter in SUMO2) linkage. A disordered region spans residues 299–348 (QSRKSMLDAGPDSWGSDAEQSTSGQPYPTSDQEGDPGSKQPRKKRGRYRQ). Over residues 316 to 329 (AEQSTSGQPYPTSD) the composition is skewed to polar residues. Positions 339–345 (PRKKRGR) match the Nuclear localization signal motif. One can recognise an HTH psq-type domain in the interval 340 to 392 (RKKRGRYRQYNSEILEEAISVVMSGKMSVSKAQSIYGIPHSTLEYKVKERLGT). Arg345 participates in a covalent cross-link: Glycyl lysine isopeptide (Lys-Gly) (interchain with G-Cter in SUMO2). Residues 368-388 (VSKAQSIYGIPHSTLEYKVKE) constitute a DNA-binding region (H-T-H motif). Gly391 is covalently cross-linked (Glycyl lysine isopeptide (Lys-Gly) (interchain with G-Cter in SUMO2)). Residues 393–412 (LKNPPKKKMKLMRSEGPDVS) are disordered. Lys414 is covalently cross-linked (Glycyl lysine isopeptide (Lys-Gly) (interchain with G-Cter in SUMO2)).

In terms of assembly, interacts with ESR1 and ESR2 in the presence of estradiol. Interacts with CTBP1, HDAC3 and HDAC6. Component of a large corepressor complex that contains about 20 proteins, including CTBP1, CTBP2, HDAC1 and HDAC2. In terms of tissue distribution, ubiquitous.

Its subcellular location is the nucleus. May act as transcription activator that binds DNA elements with the sequence 5'-CCCTATCGATCGATCTCTACCT-3'. Repressor of ligand-dependent transcription activation by target nuclear receptors. Repressor of ligand-dependent transcription activation by ESR1, ESR2, NR3C1, PGR, RARA, RARB, RARG, RXRA and VDR. This chain is Ligand-dependent corepressor, found in Homo sapiens (Human).